A 168-amino-acid chain; its full sequence is Sperm acrosome-associated protein 9 (168 aa).

As to quaternary structure, microtubule inner protein component of sperm flagellar doublet microtubules. Interacts with CABP1 and CALR. Interacts with INCA1. Interacts with microtubules. In terms of tissue distribution, expressed in sperm (at protein level). Expressed from almost all the cell types of testis, with abundant expression in round and elongated spermatids (at protein level). Predominantly expressed in tissues containing motile cilia.

Its subcellular location is the cytoplasm. It is found in the cytoplasmic vesicle. The protein localises to the secretory vesicle. It localises to the acrosome. The protein resides in the cytoskeleton. Its subcellular location is the cilium basal body. It is found in the flagellum axoneme. The protein localises to the cilium axoneme. It localises to the nucleus. Its function is as follows. Microtubule inner protein (MIP) part of the dynein-decorated doublet microtubules (DMTs) of multiciliated respiratory cells and the distal singlet microtubules of monoflagellated spermatozoa. Forms an extensive interaction network cross-linking the lumen of axonemal doublet microtubules. This chain is Sperm acrosome-associated protein 9, found in Mus musculus (Mouse).